The sequence spans 491 residues: Probable Xaa-Pro aminopeptidase AFLA_084750 (491 aa).

Mn(2+) is bound by residues Asp-271, Asp-282, Glu-419, and Glu-458.

It belongs to the peptidase M24B family. Mn(2+) serves as cofactor.

The catalysed reaction is Release of any N-terminal amino acid, including proline, that is linked to proline, even from a dipeptide or tripeptide.. Catalyzes the removal of a penultimate prolyl residue from the N-termini of peptides. The chain is Probable Xaa-Pro aminopeptidase AFLA_084750 from Aspergillus flavus (strain ATCC 200026 / FGSC A1120 / IAM 13836 / NRRL 3357 / JCM 12722 / SRRC 167).